Consider the following 124-residue polypeptide: Large-conductance mechanosensitive channel (124 aa).

The next 2 membrane-spanning stretches (helical) occupy residues 15-35 and 67-87; these read MDLA…NSLV and GSFL…FFLI.

Belongs to the MscL family. In terms of assembly, homopentamer.

It is found in the cell membrane. In terms of biological role, channel that opens in response to stretch forces in the membrane lipid bilayer. May participate in the regulation of osmotic pressure changes within the cell. The chain is Large-conductance mechanosensitive channel from Lactobacillus johnsonii (strain CNCM I-12250 / La1 / NCC 533).